The primary structure comprises 160 residues: Transcription elongation factor GreA (160 aa).

Residues 1 to 72 (MAEKTYPMTL…QISSLETKIR (72 aa)) adopt a coiled-coil conformation.

The protein belongs to the GreA/GreB family.

Functionally, necessary for efficient RNA polymerase transcription elongation past template-encoded arresting sites. The arresting sites in DNA have the property of trapping a certain fraction of elongating RNA polymerases that pass through, resulting in locked ternary complexes. Cleavage of the nascent transcript by cleavage factors such as GreA or GreB allows the resumption of elongation from the new 3'terminus. GreA releases sequences of 2 to 3 nucleotides. This chain is Transcription elongation factor GreA, found in Streptococcus pneumoniae (strain ATCC 700669 / Spain 23F-1).